Here is a 315-residue protein sequence, read N- to C-terminus: Shiga toxin subunit A (315 aa).

The signal sequence occupies residues 1–22; the sequence is MKIIIFRVLTFFFVIFSVNVVA. Residues 23–273 form an A1 region; the sequence is KEFTLDFSTA…CHHHASRVAR (251 aa). Glutamate 189 is an active-site residue. Cysteine 264 and cysteine 283 are disulfide-bonded. Residues 274–315 are A2; it reads MASDEFPSMCPADGRVRGITHNKILWDSSTLGAILMRRTISS.

It belongs to the ribosome-inactivating protein family. As to quaternary structure, shiga toxin contains a single subunit A and five copies of subunit B.

It carries out the reaction Endohydrolysis of the N-glycosidic bond at one specific adenosine on the 28S rRNA.. The A subunit is responsible for inhibiting protein synthesis through the catalytic inactivation of 60S ribosomal subunits. After endocytosis, the A subunit is cleaved by furin in two fragments, A1 and A2: A1 is the catalytically active fragment, and A2 is essential for holotoxin assembly with the B subunits. The sequence is that of Shiga toxin subunit A (stxA) from Shigella sonnei (Shigella sonnei bacteriophage 7888).